A 158-amino-acid chain; its full sequence is NADH-quinone oxidoreductase subunit B (158 aa).

4 residues coordinate [4Fe-4S] cluster: Cys-37, Cys-38, Cys-102, and Cys-132.

It belongs to the complex I 20 kDa subunit family. As to quaternary structure, NDH-1 is composed of 14 different subunits. Subunits NuoB, C, D, E, F, and G constitute the peripheral sector of the complex. [4Fe-4S] cluster serves as cofactor.

The protein localises to the cell inner membrane. The enzyme catalyses a quinone + NADH + 5 H(+)(in) = a quinol + NAD(+) + 4 H(+)(out). Its function is as follows. NDH-1 shuttles electrons from NADH, via FMN and iron-sulfur (Fe-S) centers, to quinones in the respiratory chain. The immediate electron acceptor for the enzyme in this species is believed to be ubiquinone. Couples the redox reaction to proton translocation (for every two electrons transferred, four hydrogen ions are translocated across the cytoplasmic membrane), and thus conserves the redox energy in a proton gradient. The chain is NADH-quinone oxidoreductase subunit B from Thiobacillus denitrificans (strain ATCC 25259 / T1).